Reading from the N-terminus, the 901-residue chain is HTH-type transcriptional regulator MalT (901 aa).

Residue 39–46 (SPAGYGKT) coordinates ATP. In terms of domain architecture, HTH luxR-type spans 829-894 (ELIRTSPLTQ…AAVQHAQKLL (66 aa)). The segment at residues 853–872 (NEQIAGELEVAATTIKTHIR) is a DNA-binding region (H-T-H motif).

This sequence belongs to the MalT family. Monomer in solution. Oligomerizes to an active state in the presence of the positive effectors ATP and maltotriose.

Activated by ATP and maltotriose, which are both required for DNA binding. Functionally, positively regulates the transcription of the maltose regulon whose gene products are responsible for uptake and catabolism of malto-oligosaccharides. Specifically binds to the promoter region of its target genes, recognizing a short DNA motif called the MalT box. The protein is HTH-type transcriptional regulator MalT of Shigella flexneri serotype 5b (strain 8401).